The sequence spans 96 residues: Large ribosomal subunit protein uL23 (96 aa).

Belongs to the universal ribosomal protein uL23 family. In terms of assembly, part of the 50S ribosomal subunit. Contacts protein L29, and trigger factor when it is bound to the ribosome.

One of the early assembly proteins it binds 23S rRNA. One of the proteins that surrounds the polypeptide exit tunnel on the outside of the ribosome. Forms the main docking site for trigger factor binding to the ribosome. The sequence is that of Large ribosomal subunit protein uL23 from Thermus thermophilus (strain ATCC BAA-163 / DSM 7039 / HB27).